The chain runs to 426 residues: Histidine--tRNA ligase (426 aa).

This sequence belongs to the class-II aminoacyl-tRNA synthetase family. In terms of assembly, homodimer.

It is found in the cytoplasm. The enzyme catalyses tRNA(His) + L-histidine + ATP = L-histidyl-tRNA(His) + AMP + diphosphate + H(+). The protein is Histidine--tRNA ligase of Microcystis aeruginosa (strain NIES-843 / IAM M-2473).